Here is a 146-residue protein sequence, read N- to C-terminus: Small ribosomal subunit protein uS13 (146 aa).

The disordered stretch occupies residues 119-146 (ARGKKVRGQRTRSTGRKGRTVGVVRRKR).

This sequence belongs to the universal ribosomal protein uS13 family. In terms of assembly, part of the 30S ribosomal subunit. Forms a loose heterodimer with protein S19. Forms two bridges to the 50S subunit in the 70S ribosome.

In terms of biological role, located at the top of the head of the 30S subunit, it contacts several helices of the 16S rRNA. In the 70S ribosome it contacts the 23S rRNA (bridge B1a) and protein L5 of the 50S subunit (bridge B1b), connecting the 2 subunits; these bridges are implicated in subunit movement. This chain is Small ribosomal subunit protein uS13, found in Archaeoglobus fulgidus (strain ATCC 49558 / DSM 4304 / JCM 9628 / NBRC 100126 / VC-16).